Consider the following 78-residue polypeptide: Translational regulator CsrA (78 aa).

This sequence belongs to the CsrA/RsmA family. Homodimer; the beta-strands of each monomer intercalate to form a hydrophobic core, while the alpha-helices form wings that extend away from the core.

It localises to the cytoplasm. Functionally, a translational regulator that binds mRNA to regulate translation initiation and/or mRNA stability. Usually binds in the 5'-UTR at or near the Shine-Dalgarno sequence preventing ribosome-binding, thus repressing translation. Its main target seems to be the major flagellin gene, while its function is anatagonized by FliW. This chain is Translational regulator CsrA, found in Borrelia turicatae (strain 91E135).